The following is a 356-amino-acid chain: Trifolitoxin operon protein TfxC (356 aa).

The polypeptide is Trifolitoxin operon protein TfxC (tfxC) (Rhizobium leguminosarum bv. trifolii).